Here is a 602-residue protein sequence, read N- to C-terminus: Potassium-transporting ATPase potassium-binding subunit (602 aa).

10 helical membrane passes run 3-23 (ANNL…AVPV), 64-84 (QYAL…YALL), 135-155 (GLTV…LALI), 178-198 (LYVL…QGVI), 282-302 (FSNF…CLVF), 313-333 (VAVL…ETSA), 418-438 (GLYG…LMIG), 456-476 (VSIV…IAVL), 522-542 (WMTA…VLAI), and 565-585 (LFVV…YMPA).

The protein belongs to the KdpA family. As to quaternary structure, the system is composed of three essential subunits: KdpA, KdpB and KdpC.

The protein resides in the cell inner membrane. Functionally, part of the high-affinity ATP-driven potassium transport (or Kdp) system, which catalyzes the hydrolysis of ATP coupled with the electrogenic transport of potassium into the cytoplasm. This subunit binds the periplasmic potassium ions and delivers the ions to the membrane domain of KdpB through an intramembrane tunnel. This chain is Potassium-transporting ATPase potassium-binding subunit, found in Burkholderia mallei (strain ATCC 23344).